An 80-amino-acid chain; its full sequence is DNA-binding protein S1FA2 (80 aa).

Positions 54 to 59 (PPRKKK) match the Nuclear localization signal motif. A compositionally biased stretch (basic residues) spans 55–70 (PRKKKPVSKKKMKREK). The tract at residues 55–80 (PRKKKPVSKKKMKREKLKQGVSAPGE) is disordered.

It belongs to the S1FA transcription factor family.

The protein localises to the nucleus. In terms of biological role, DNA-binding protein that specifically recognizes a negative element (S1F) within the RPS1 promoter. The protein is DNA-binding protein S1FA2 (S1FA2) of Oryza sativa subsp. japonica (Rice).